Consider the following 422-residue polypeptide: 5-hydroxytryptamine receptor 1A (422 aa).

Residues 1–38 (MDVFSFGQGNNTTASQEPFGTGGNVTSISDVTFSYQVI) lie on the Extracellular side of the membrane. N-linked (GlcNAc...) asparagine glycans are attached at residues Asn-10, Asn-11, and Asn-24. The chain crosses the membrane as a helical span at residues 39 to 59 (TSLLLGTLIFCAVLGNACVVA). Over 60–73 (AIALERSLQNVANY) the chain is Cytoplasmic. A helical transmembrane segment spans residues 74 to 98 (LIGSLAVTDLMVSVLVLPMAALYQV). Topologically, residues 99–107 (LNKWTLGQV) are extracellular. Residues 108–132 (TCDLFIALDVLCCTSSILHLCAIAL) form a helical membrane-spanning segment. Residues Cys-109 and Cys-187 are joined by a disulfide bond. The serotonin site is built by Asp-116 and Cys-120. The short motif at 133-135 (DRY) is the DRY motif; important for ligand-induced conformation changes element. Topologically, residues 133 to 152 (DRYWAITDPIDYVNKRTPRR) are cytoplasmic. The chain crosses the membrane as a helical span at residues 153–174 (AAALISLTWLIGFLISIPPMLG). Over 175 to 193 (WRTPEDRSDPDACTISKDH) the chain is Extracellular. A helical transmembrane segment spans residues 194-216 (GYTIYSTFGAFYIPLLLMLVLYG). Residues 217-346 (RIFRAARFRI…LARERKTVKT (130 aa)) lie on the Cytoplasmic side of the membrane. A disordered region spans residues 235–261 (KKGAGTSLGTSSAPPPKKSLNGQPGSG). The 1D-myo-inositol 4-phosphate site is built by Lys-345, Thr-346, and Gly-352. A helical membrane pass occupies residues 347–370 (LGIIMGTFILCWLPFFIVALVLPF). Residues 371-378 (CESSCHMP) lie on the Extracellular side of the membrane. A helical membrane pass occupies residues 379 to 403 (ALLGAIINWLGYSNSLLNPVIYAYF). The NPxxY motif; important for ligand-induced conformation changes and signaling signature appears at 396–400 (NPVIY). Residues Phe-403, Asn-404, and Lys-405 each coordinate 1D-myo-inositol 4-phosphate. The Cytoplasmic segment spans residues 404–422 (NKDFQNAFKKIIKCKFCRR).

Belongs to the G-protein coupled receptor 1 family. 5-hydroxytryptamine receptor subfamily. HTR1A sub-subfamily. In terms of assembly, heterodimer; heterodimerizes with GPER1. Interacts with YIF1B. Interacts with GPR39 and GALR1. As to expression, detected in hypothalamus, mesencephalon, amygdala, medulla, thalamus, septum and hippocampus.

It is found in the cell membrane. The protein resides in the cell projection. Its subcellular location is the dendrite. With respect to regulation, G-protein coupled receptor activity is regulated by lipids: phosphatidylinositol 4-phosphate increases HTR1A-mediated activity. G-protein coupled receptor for 5-hydroxytryptamine (serotonin). Also functions as a receptor for various drugs and psychoactive substances. Ligand binding causes a conformation change that triggers signaling via guanine nucleotide-binding proteins (G proteins) and modulates the activity of downstream effectors, such as adenylate cyclase. HTR1A is coupled to G(i)/G(o) G alpha proteins and mediates inhibitory neurotransmission: signaling inhibits adenylate cyclase activity and activates a phosphatidylinositol-calcium second messenger system that regulates the release of Ca(2+) ions from intracellular stores. Beta-arrestin family members regulate signaling by mediating both receptor desensitization and resensitization processes. The polypeptide is 5-hydroxytryptamine receptor 1A (Rattus norvegicus (Rat)).